The chain runs to 143 residues: Nucleoside diphosphate kinase (143 aa).

Lys-11, Phe-59, Arg-87, Thr-93, Arg-104, and Asn-114 together coordinate ATP. Catalysis depends on His-117, which acts as the Pros-phosphohistidine intermediate.

The protein belongs to the NDK family. Homotetramer. It depends on Mg(2+) as a cofactor.

It localises to the cytoplasm. The enzyme catalyses a 2'-deoxyribonucleoside 5'-diphosphate + ATP = a 2'-deoxyribonucleoside 5'-triphosphate + ADP. It catalyses the reaction a ribonucleoside 5'-diphosphate + ATP = a ribonucleoside 5'-triphosphate + ADP. Its function is as follows. Major role in the synthesis of nucleoside triphosphates other than ATP. The ATP gamma phosphate is transferred to the NDP beta phosphate via a ping-pong mechanism, using a phosphorylated active-site intermediate. The chain is Nucleoside diphosphate kinase from Salmonella arizonae (strain ATCC BAA-731 / CDC346-86 / RSK2980).